Here is a 274-residue protein sequence, read N- to C-terminus: uncharacterized protein (274 aa).

The N-terminal stretch at 1–30 (MTVYTPTSERQAPATTHRQMWALGDYAAIA) is a signal peptide.

To M.tuberculosis Rv1405c.

This is an uncharacterized protein from Mycobacterium tuberculosis (strain CDC 1551 / Oshkosh).